Here is a 63-residue protein sequence, read N- to C-terminus: Toxin Tx7335 (63 aa).

Disulfide bonds link Cys-3–Cys-24, Cys-17–Cys-39, Cys-25–Cys-55, and Cys-56–Cys-61.

In terms of processing, contains 4 disulfide bonds. Expressed by the venom gland.

The protein localises to the secreted. Functionally, activates bacterial pH-gated potassium channel KcsA by binding to its extracellular domain, probably at a site different from channel inhibitors. Increases both mean open time and open probability of KscA. The protein is Toxin Tx7335 of Dendroaspis angusticeps (Eastern green mamba).